A 111-amino-acid chain; its full sequence is uncharacterized protein (111 aa).

It belongs to the UPF0440 family.

This is an uncharacterized protein from Pyrococcus furiosus (strain ATCC 43587 / DSM 3638 / JCM 8422 / Vc1).